Consider the following 200-residue polypeptide: Methylthioribulose-1-phosphate dehydratase (200 aa).

Zn(2+)-binding residues include H90 and H92.

This sequence belongs to the aldolase class II family. MtnB subfamily. Zn(2+) serves as cofactor.

The enzyme catalyses 5-(methylsulfanyl)-D-ribulose 1-phosphate = 5-methylsulfanyl-2,3-dioxopentyl phosphate + H2O. Its pathway is amino-acid biosynthesis; L-methionine biosynthesis via salvage pathway; L-methionine from S-methyl-5-thio-alpha-D-ribose 1-phosphate: step 2/6. Its function is as follows. Catalyzes the dehydration of methylthioribulose-1-phosphate (MTRu-1-P) into 2,3-diketo-5-methylthiopentyl-1-phosphate (DK-MTP-1-P). This chain is Methylthioribulose-1-phosphate dehydratase, found in Sodalis glossinidius (strain morsitans).